The sequence spans 428 residues: Gamma-glutamyl phosphate reductase (428 aa).

It belongs to the gamma-glutamyl phosphate reductase family.

It is found in the cytoplasm. The enzyme catalyses L-glutamate 5-semialdehyde + phosphate + NADP(+) = L-glutamyl 5-phosphate + NADPH + H(+). It participates in amino-acid biosynthesis; L-proline biosynthesis; L-glutamate 5-semialdehyde from L-glutamate: step 2/2. Its function is as follows. Catalyzes the NADPH-dependent reduction of L-glutamate 5-phosphate into L-glutamate 5-semialdehyde and phosphate. The product spontaneously undergoes cyclization to form 1-pyrroline-5-carboxylate. The chain is Gamma-glutamyl phosphate reductase from Anaeromyxobacter sp. (strain Fw109-5).